Consider the following 343-residue polypeptide: Sorbitol dehydrogenase (343 aa).

Residues methionine 1–lysine 26 form a disordered region. Residues cysteine 39, histidine 60, and glutamate 61 each contribute to the Zn(2+) site. Glutamate 146 contributes to the substrate binding site. Residues isoleucine 174, arginine 200, and valine 262–leucine 264 each bind NAD(+).

This sequence belongs to the zinc-containing alcohol dehydrogenase family. In terms of assembly, homotetramer. It depends on Zn(2+) as a cofactor.

The enzyme catalyses keto-D-fructose + NADH + H(+) = D-sorbitol + NAD(+). It catalyses the reaction xylitol + NAD(+) = D-xylulose + NADH + H(+). It carries out the reaction L-iditol + NAD(+) = keto-L-sorbose + NADH + H(+). Polyol dehydrogenase that catalyzes the NAD(+)-dependent oxidation of various sugar alcohols. Is active with D-sorbitol (D-glucitol), xylitol and L-iditol as substrates, leading to the C2-oxidized products D-fructose, D-xylulose and L-sorbose, respectively. The chain is Sorbitol dehydrogenase (gutB) from Halalkalibacterium halodurans (strain ATCC BAA-125 / DSM 18197 / FERM 7344 / JCM 9153 / C-125) (Bacillus halodurans).